Reading from the N-terminus, the 4293-residue chain is Polycystin-1 (4293 aa).

An N-terminal signal peptide occupies residues 1-23; it reads MPLGAPALLALALGLGLWLGALA. One can recognise an LRRNT domain in the interval 24–67; that stretch reads GDPGRGCGPCPLPCFCGPAPDAACRVNCSGRWLQTLGPSLRIPA. The Extracellular portion of the chain corresponds to 24–3066; sequence GDPGRGCGPC…IFPEPSASIN (3043 aa). Residues Asn-50 and Asn-89 are each glycosylated (N-linked (GlcNAc...) asparagine). LRR repeat units lie at residues 68–91 and 92–113; these read DATA…VNLS and ALVE…VFAN. Residues Asn-116 and Asn-121 are each glycosylated (N-linked (GlcNAc...) asparagine). The LRRCT domain occupies 125-178; that stretch reads NPFECNCGLAWLPRWAKEHQVHVVQSEATTCRGPIPLAGQPLLSIPLLDNACGE. A WSC domain is found at 177 to 271; sequence GEEYVACLPD…PTLLQHTFPA (95 aa). N-linked (GlcNAc...) asparagine glycosylation is found at Asn-187 and Asn-239. Residues 272 to 359 enclose the PKD 1 domain; the sequence is SPGATLVGPH…VQVEATPTVL (88 aa). Asn-370 carries N-linked (GlcNAc...) asparagine glycosylation. Residues 415–530 form the C-type lectin domain; that stretch reads GNGHCYRLVA…CSAPHSYVCE (116 aa). Disulfide bonds link Cys-436–Cys-529 and Cys-507–Cys-521. The segment at 613–632 is disordered; that stretch reads GGAAAVPEGSSEPDNRTEPA. Residue Asn-627 is glycosylated (N-linked (GlcNAc...) asparagine). The region spanning 633–666 is the LDL-receptor class A; atypical domain; the sequence is PKCVPEELWCPGANVCIPFDASCNSHVCINGSVS. 2 disulfide bridges follow: Cys-635/Cys-648 and Cys-642/Cys-660. N-linked (GlcNAc...) asparagine glycans are attached at residues Asn-662, Asn-740, Asn-804, Asn-835, Asn-848, Asn-859, Asn-884, Asn-915, Asn-998, Asn-1004, Asn-1028, Asn-1084, Asn-1096, Asn-1107, Asn-1172, Asn-1188, Asn-1234, Asn-1263, Asn-1330, Asn-1342, Asn-1376, Asn-1444, Asn-1449, Asn-1468, Asn-1535, Asn-1548, Asn-1557, Asn-1643, Asn-1657, Asn-1706, Asn-1730, Asn-1788, Asn-1831, Asn-1863, and Asn-1876. 15 PKD domains span residues 849 to 922, 929 to 1014, 1017 to 1123, 1121 to 1209, 1207 to 1292, 1288 to 1377, 1376 to 1463, 1462 to 1545, 1544 to 1629, 1630 to 1718, 1716 to 1802, 1804 to 1886, 1885 to 1970, 1972 to 2053, and 2056 to 2144; these read ATAT…RVTA, LRAV…NKMH, WVSA…LPNV, PNVA…LHGL, HGLT…EVLH, LEVL…IRNI, NITL…VLVT, VTGI…VRGL, GLTI…IEGL, QVAG…VESL, ESLI…VGGL, IRTS…IVNL, NLML…VVGL, VPNC…MVEV, and IIQY…ACRE. Asn-1987, Asn-2046, Asn-2070, Asn-2121, Asn-2244, Asn-2349, Asn-2391, Asn-2408, Asn-2414, Asn-2563, Asn-2640, Asn-2713, Asn-2749, Asn-2813, Asn-2836, Asn-2873, Asn-2948, and Asn-2986 each carry an N-linked (GlcNAc...) asparagine glycan. The 687-residue stretch at 2142–2828 folds into the REJ domain; the sequence is CREPEVEVAL…QLIFLVDSNP (687 aa). Positions 2857 to 3055 constitute a GAIN-B domain; the sequence is PIEQLAAERA…SLFVPPSHVQ (199 aa). Cysteines 3007 and 3035 form a disulfide. The GPS stretch occupies residues 3007-3055; sequence CQYFSEEMMMWRTEGIVPLEETSPSQAVCLTRHLTAFGASLFVPPSHVQ. The chain crosses the membrane as a helical span at residues 3067-3087; sequence YIVLLTCVICLVTYVVMAMIL. Topologically, residues 3088 to 3269 are cytoplasmic; that stretch reads RKLDQLDVSR…DRPPRSRFTR (182 aa). Residues 3110–3225 enclose the PLAT domain; the sequence is FKYEILVKTG…EANGGLVEKE (116 aa). Residues 3270-3290 traverse the membrane as a helical segment; that stretch reads VQRVTCCVLLLCLFLAANAVW. At 3291 to 3315 the chain is on the extracellular side; sequence YGVVRDTTYSMGPVSSLISPGVDTV. Residues 3316–3336 traverse the membrane as a helical segment; the sequence is AIGLVSSVVVYPVYLAVLFLF. Over 3337–3549 the chain is Cytoplasmic; it reads RMSRSKVSGD…LPAWCAPLAH (213 aa). Residues 3550 to 3570 traverse the membrane as a helical segment; the sequence is GLSLLLVAVAVAVSGWIGASF. Residues 3571-3572 lie on the Extracellular side of the membrane; it reads PP. The helical transmembrane segment at 3573 to 3593 threads the bilayer; the sequence is SVSVMWLLSSSSSFLASFLGW. Topologically, residues 3594-3655 are cytoplasmic; that stretch reads EPLKVLLEAL…LAKEEARKVK (62 aa). A helical transmembrane segment spans residues 3656–3676; it reads RLHDMLKRLLVYMLFLLVTLL. The Extracellular segment spans residues 3677–3891; the sequence is ANYGDASCHG…RLSTGLSLPL (215 aa). N-linked (GlcNAc...) asparagine glycosylation is found at Asn-3728 and Asn-3780. A helical transmembrane segment spans residues 3892-3912; that stretch reads LTSVCLLLFALYFSMAEVQTW. The Cytoplasmic segment spans residues 3913 to 3925; it reads RKDGCACTARPDT. Residues 3926–3946 form a helical membrane-spanning segment; the sequence is WARCLLVILTAATGLVRLAQL. Residues 3947–3974 lie on the Extracellular side of the membrane; it reads GIADRQWTHFVQDHPRHFTSFDQVAQLG. The chain crosses the membrane as a helical span at residues 3975 to 3995; sequence SVARGLAASLLFLLLVKAAQQ. The Cytoplasmic portion of the chain corresponds to 3996 to 4017; sequence LRFVRQWSVFGKTLCRALPELM. The helical transmembrane segment at 4018 to 4038 threads the bilayer; sequence GATLGLVLLGVAYAQMAILLI. Residues 4039–4080 are Extracellular-facing; sequence SSGADTLYNMARAFLVLCPGARVPTLCPSESWYLSPLLCVGL. A helical membrane pass occupies residues 4081–4100; the sequence is WALRVWGALRLGAILLRWRY. The Cytoplasmic segment spans residues 4101-4293; the sequence is HALRGELYRP…PNNKVHPSST (193 aa). Disordered stretches follow at residues 4150 to 4197 and 4235 to 4293; these read PLPS…STLK and SLQG…PSST. Positions 4153-4172 are enriched in low complexity; that stretch reads SRSSRGSKSSPVVLPPSSGS. Ser-4156 is subject to Phosphoserine; by PRKX; in vitro. The span at 4173 to 4195 shows a compositional bias: polar residues; the sequence is EASHPSTSSSQPDGPSASLSRST. A coiled-coil region spans residues 4210–4241; sequence ESLLVQFDRLNQATEDVYQLEQQLQSLQGHGH. Positions 4238–4256 are enriched in low complexity; the sequence is GHGHNGPPSSPSPGCFPGS. Over residues 4265 to 4276 the composition is skewed to polar residues; it reads SRASQGLDQTVG.

Belongs to the polycystin family. In terms of assembly, component of the heterotetrameric polycystin channel complex with PKD2; the tetramer contains one PKD1 chain and three PKD2 chains. Interacts with PKD2; the interaction is required for ciliary localization. Interacts with PKD2L1. Interacts with PRKX; involved in differentiation and controlled morphogenesis of the kidney. Interacts (via extracellular domain) with WNT3A, WNT4 and WNT9B. Interacts with WNT5A, DVL1 and DVL2. Interacts with NPHP1 (via SH3 domain). Interacts with BBS1, BBS4, BBS5 and TTC8. Interacts with RGS7. Interacts (via C-terminal domain) with RABEP1; the interaction connects PKD1:PKD2 to GGA1 and ARL3 that mediate the ciliary targeting. Interacts (via the PKD repeats in the N-terminal extracellular region) with EPCIP; the interaction is not dependent on N-glycosylation of either protein. N-glycosylated. In terms of processing, after synthesis, undergoes autoproteolytic cleavage between Leu-3040 and Thr-3041 in the GPS region of the GAIN-B domain. Cleavage at the GPS region occurs through a cis-autoproteolytic mechanism involving an ester-intermediate via N-O acyl rearrangement. This process takes place in the early secretory pathway, depends on initial N-glycosylation, and requires the REJ domain. PKD1 is ubiquitously and incompletely cleaved in wild-type mice, so that uncleaved and cleaved PKD1 molecules coexist. The differential patterns of cleavage during embryonic development, as well as in adult mice, suggest different functions of uncleaved and cleaved molecules.

It localises to the cell membrane. It is found in the cell projection. Its subcellular location is the cilium. The protein localises to the endoplasmic reticulum. The protein resides in the golgi apparatus. It localises to the vesicle. It is found in the secreted. Its subcellular location is the extracellular exosome. Its function is as follows. Component of a heteromeric calcium-permeable ion channel formed by PKD1 and PKD2 that is activated by interaction between PKD1 and a Wnt family member, such as WNT3A and WNT9B. Both PKD1 and PKD2 are required for channel activity. Involved in renal tubulogenesis. Involved in fluid-flow mechanosensation by the primary cilium in renal epithelium. Acts as a regulator of cilium length, together with PKD2. The dynamic control of cilium length is essential in the regulation of mechanotransductive signaling. The cilium length response creates a negative feedback loop whereby fluid shear-mediated deflection of the primary cilium, which decreases intracellular cAMP, leads to cilium shortening and thus decreases flow-induced signaling. May be an ion-channel regulator. Involved in adhesive protein-protein and protein-carbohydrate interactions. Likely to be involved with polycystin-1-interacting protein 1 in the detection, sequestration and exocytosis of senescent mitochondria. The sequence is that of Polycystin-1 from Mus musculus (Mouse).